Consider the following 810-residue polypeptide: Lon protease (810 aa).

The 195-residue stretch at 32-226 folds into the Lon N-terminal domain; the sequence is LPAIAMRSNM…RILDILARET (195 aa). 376-383 is an ATP binding site; sequence GPPGVGKT. The Lon proteolytic domain maps to 612-791; sequence KPMIGVTTGL…EEVLEVALNE (180 aa). Catalysis depends on residues Ser697 and Lys740.

The protein belongs to the peptidase S16 family. As to quaternary structure, homohexamer. Organized in a ring with a central cavity.

The protein localises to the cytoplasm. The catalysed reaction is Hydrolysis of proteins in presence of ATP.. Its function is as follows. ATP-dependent serine protease that mediates the selective degradation of mutant and abnormal proteins as well as certain short-lived regulatory proteins. Required for cellular homeostasis and for survival from DNA damage and developmental changes induced by stress. Degrades polypeptides processively to yield small peptide fragments that are 5 to 10 amino acids long. Binds to DNA in a double-stranded, site-specific manner. This is Lon protease from Fervidobacterium nodosum (strain ATCC 35602 / DSM 5306 / Rt17-B1).